A 563-amino-acid polypeptide reads, in one-letter code: Arginine--tRNA ligase (563 aa).

A 'HIGH' region motif is present at residues 121-131 (PNIAKPFSIGH).

This sequence belongs to the class-I aminoacyl-tRNA synthetase family. As to quaternary structure, monomer.

The protein localises to the cytoplasm. It catalyses the reaction tRNA(Arg) + L-arginine + ATP = L-arginyl-tRNA(Arg) + AMP + diphosphate. This Streptococcus pneumoniae (strain Hungary19A-6) protein is Arginine--tRNA ligase.